Here is a 968-residue protein sequence, read N- to C-terminus: Chaperone protein ClpB3, chloroplastic (968 aa).

Residues 1–67 (MATATTTATA…RLDHRPFVVR (67 aa)) constitute a chloroplast transit peptide. Residues 78–222 (TQQEFTEMAW…KSAIESIRGK (145 aa)) form the Clp R domain. Repeat regions lie at residues 82–147 (FTEM…IQRQ) and 159–222 (LGRD…IRGK). The interval 237-485 (LEKYGKDLTA…KLKMEITSKP (249 aa)) is i. Position 282-289 (282-289 (GEPGVGKT)) interacts with ATP. The stretch at 488-606 (LDELDRSVIK…NEYLSSGKSM (119 aa)) forms a coiled coil. The interval 611–802 (VLGSDIAEIV…VIIMTSNVGS (192 aa)) is II. 685–692 (GPTGVGKT) is a binding site for ATP.

Belongs to the ClpA/ClpB family.

It is found in the plastid. It localises to the chloroplast. In terms of biological role, molecular chaperone essential for chloroplast development and seedling viability. Mediates internal thylakoid membrane formation and confers thermotolerance to chloroplasts during heat stress. This is Chaperone protein ClpB3, chloroplastic (CLPB3) from Arabidopsis thaliana (Mouse-ear cress).